The chain runs to 78 residues: Small ribosomal subunit protein bS16 (78 aa).

The protein belongs to the bacterial ribosomal protein bS16 family.

The chain is Small ribosomal subunit protein bS16 from Thermodesulfovibrio yellowstonii (strain ATCC 51303 / DSM 11347 / YP87).